Here is a 263-residue protein sequence, read N- to C-terminus: Protein IQ-DOMAIN 9 (263 aa).

A disordered region spans residues 16-41; sequence SKQGTEKKKTSAVKPKKGSKKKGTSL. The Nuclear localization signal 1 motif lies at 21-28; it reads EKKKTSAV. Residues 25 to 38 show a composition bias toward basic residues; it reads TSAVKPKKGSKKKG. Residues 46–75 enclose the IQ domain; the sequence is EDWAATRIQTAFKAYKARKSLRRLKGIARA. The segment at 59–78 is calmodulin-binding; the sequence is AYKARKSLRRLKGIARAKLS. Residues 107 to 114 carry the Nuclear localization signal 2 motif; the sequence is ARRVCMVT. The tract at residues 216 to 263 is disordered; sequence TPKKPKSSKTDSNSPAKRTVSLSSVPAKTPFPGARNTVKPRRLSFPGA. The span at 226 to 241 shows a compositional bias: polar residues; it reads DSNSPAKRTVSLSSVP.

This sequence belongs to the IQD family. In terms of assembly, binds to multiple calmodulin (CaM) in the presence of Ca(2+) and CaM-like proteins.

It localises to the nucleus. It is found in the nuclear body. Functionally, may be involved in cooperative interactions with calmodulins or calmodulin-like proteins. Recruits calmodulin proteins to microtubules, thus being a potential scaffold in cellular signaling and trafficking. May associate with nucleic acids and regulate gene expression at the transcriptional or post-transcriptional level. This chain is Protein IQ-DOMAIN 9, found in Arabidopsis thaliana (Mouse-ear cress).